The sequence spans 250 residues: L-ascorbate peroxidase 1, cytosolic (250 aa).

His-42 acts as the Proton acceptor in catalysis. The segment at 113–137 (VPFHPGREDKPAPPPEGRLPDATKG) is disordered. Position 163 (His-163) interacts with heme b. 4 residues coordinate K(+): Thr-164, Thr-180, Asn-182, and Asp-187.

It belongs to the peroxidase family. Ascorbate peroxidase subfamily. The cofactor is heme b.

The protein localises to the cytoplasm. The catalysed reaction is L-ascorbate + H2O2 = L-dehydroascorbate + 2 H2O. Functionally, plays a key role in hydrogen peroxide removal. This Oryza sativa subsp. indica (Rice) protein is L-ascorbate peroxidase 1, cytosolic (APX1).